The following is a 575-amino-acid chain: Proline--tRNA ligase (575 aa).

The protein belongs to the class-II aminoacyl-tRNA synthetase family. ProS type 1 subfamily. In terms of assembly, homodimer.

The protein resides in the cytoplasm. It catalyses the reaction tRNA(Pro) + L-proline + ATP = L-prolyl-tRNA(Pro) + AMP + diphosphate. Functionally, catalyzes the attachment of proline to tRNA(Pro) in a two-step reaction: proline is first activated by ATP to form Pro-AMP and then transferred to the acceptor end of tRNA(Pro). As ProRS can inadvertently accommodate and process non-cognate amino acids such as alanine and cysteine, to avoid such errors it has two additional distinct editing activities against alanine. One activity is designated as 'pretransfer' editing and involves the tRNA(Pro)-independent hydrolysis of activated Ala-AMP. The other activity is designated 'posttransfer' editing and involves deacylation of mischarged Ala-tRNA(Pro). The misacylated Cys-tRNA(Pro) is not edited by ProRS. The sequence is that of Proline--tRNA ligase from Pseudothermotoga lettingae (strain ATCC BAA-301 / DSM 14385 / NBRC 107922 / TMO) (Thermotoga lettingae).